A 199-amino-acid polypeptide reads, in one-letter code: GQGSLAYPGLRTQGNLETLSGPNDATRGLTSLADTFEHVIEELLDEQQVIQPSKENKDADLYSTRVMLSSQVPLEPPLLFLLEEYKNYLDAANMSMRVRRHSDPARRGELSVCDSTSEWVTAAEKKTAVDMSGATVTVLEKVPVPKGQLKQYFYETKCSSKGYAKEGCRGIDKRYWNSQCRTTQSFVRALTMDNKKRVG.

A disordered region spans residues 1 to 23 (GQGSLAYPGLRTQGNLETLSGPN). A propeptide spanning residues 1 to 100 (GQGSLAYPGL…AANMSMRVRR (100 aa)) is cleaved from the precursor. Over residues 12–23 (TQGNLETLSGPN) the composition is skewed to polar residues. N-linked (GlcNAc...) asparagine glycosylation occurs at N93. A disulfide bridge connects residues C113 and C180.

This sequence belongs to the NGF-beta family.

The protein resides in the secreted. Its function is as follows. Promotes the survival of neuronal populations that are all located either in the central nervous system or directly connected to it. This chain is Neurotrophic factor BDNF precursor form (BDNF), found in Eunectes notaeus (Yellow anaconda).